We begin with the raw amino-acid sequence, 307 residues long: Ribonuclease HII (307 aa).

The region spanning 44-235 (EPVAGVDEAG…VRRAGGRMEL (192 aa)) is the RNase H type-2 domain. Residues Asp50, Glu51, and Asp144 each coordinate a divalent metal cation. The disordered stretch occupies residues 241–307 (ADSDDSPGFA…SRPAELLEIP (67 aa)). Positions 250-280 (ASGPAEAVPGPAGSAGAASAAARPAAAGPAG) are enriched in low complexity. The span at 287 to 296 (RAADLRDNGD) shows a compositional bias: basic and acidic residues.

It belongs to the RNase HII family. It depends on Mn(2+) as a cofactor. Mg(2+) serves as cofactor.

It localises to the cytoplasm. The catalysed reaction is Endonucleolytic cleavage to 5'-phosphomonoester.. Its function is as follows. Endonuclease that specifically degrades the RNA of RNA-DNA hybrids. This chain is Ribonuclease HII, found in Acidothermus cellulolyticus (strain ATCC 43068 / DSM 8971 / 11B).